Here is a 402-residue protein sequence, read N- to C-terminus: Zinc finger protein 586 (402 aa).

One can recognise a KRAB domain in the interval 15–87 (VTFEDVAVNF…DQGGHSGERP (73 aa)). The C2H2-type 1; degenerate zinc-finger motif lies at 88–116 (YECGEYRKLFKNKSCLTEPRRDHKHRNVR). The C2H2-type 2; degenerate zinc finger occupies 122–144 (YECSKYGKLFHQKPTLHIHERFH). The C2H2-type 3; degenerate zinc-finger motif lies at 150–172 (YECSECGKSFHQSSSLLQRQTLH). 8 C2H2-type zinc fingers span residues 178-200 (YECI…RKVH), 206-228 (YECN…RRIH), 234-256 (YECS…LRVH), 262-284 (YECV…QRVH), 290-312 (YECS…QRVH), 317-339 (HECG…LRVH), 345-367 (YECS…LRVH), and 373-395 (YECI…QRVH).

The protein belongs to the krueppel C2H2-type zinc-finger protein family.

The protein resides in the nucleus. In terms of biological role, may be involved in transcriptional regulation. The sequence is that of Zinc finger protein 586 (ZNF586) from Homo sapiens (Human).